The primary structure comprises 256 residues: Ribonuclease HII (256 aa).

The 185-residue stretch at 72–256 (ALICGIDEVG…SFEPIKSMMK (185 aa)) folds into the RNase H type-2 domain. Positions 78, 79, and 170 each coordinate a divalent metal cation.

This sequence belongs to the RNase HII family. Requires Mn(2+) as cofactor. Mg(2+) is required as a cofactor.

It is found in the cytoplasm. The enzyme catalyses Endonucleolytic cleavage to 5'-phosphomonoester.. In terms of biological role, endonuclease that specifically degrades the RNA of RNA-DNA hybrids. This Staphylococcus epidermidis (strain ATCC 12228 / FDA PCI 1200) protein is Ribonuclease HII.